Reading from the N-terminus, the 130-residue chain is Small ribosomal subunit protein uS9 (130 aa).

This sequence belongs to the universal ribosomal protein uS9 family.

The sequence is that of Small ribosomal subunit protein uS9 from Hydrogenovibrio crunogenus (strain DSM 25203 / XCL-2) (Thiomicrospira crunogena).